Consider the following 352-residue polypeptide: Molybdenum import ATP-binding protein ModC (352 aa).

The 229-residue stretch at 1–229 (MLELNFSQTL…SVMHPWLPKE (229 aa)) folds into the ABC transporter domain. Position 31–38 (31–38 (GVSGAGKT)) interacts with ATP. One can recognise a Mop domain in the interval 289-352 (QTSIRNVLRA…AQVKSVSITA (64 aa)).

Belongs to the ABC transporter superfamily. Molybdate importer (TC 3.A.1.8) family. In terms of assembly, the complex is composed of two ATP-binding proteins (ModC), two transmembrane proteins (ModB) and a solute-binding protein (ModA).

The protein resides in the cell inner membrane. It carries out the reaction molybdate(out) + ATP + H2O = molybdate(in) + ADP + phosphate + H(+). Functionally, part of the ABC transporter complex ModABC involved in molybdenum import. Responsible for energy coupling to the transport system. This chain is Molybdenum import ATP-binding protein ModC, found in Salmonella paratyphi A (strain ATCC 9150 / SARB42).